The following is a 1499-amino-acid chain: DENN domain-containing protein 4B (1499 aa).

Residues 26 to 45 (PEEKWVPEPTGPLRPPRPAE) form a disordered region. Positions 34–44 (PTGPLRPPRPA) are enriched in pro residues. An MABP domain is found at 44–203 (AEPITDVAVI…AVYLCYKVGL (160 aa)). Residues 195-369 (VYLCYKVGLA…NVPFPSPQRP (175 aa)) form the uDENN domain. One can recognise a cDENN domain in the interval 390 to 526 (PLPLSGASFL…PYKLLLATLT (137 aa)). One can recognise a dDENN domain in the interval 528-644 (LYQQLDQTYT…ECSFGSARHA (117 aa)). A disordered region spans residues 717-744 (PQEQQGALPVPGPSRSAPSSPAPRRTKQ). Low complexity predominate over residues 729–739 (PSRSAPSSPAP). 2 PPR repeats span residues 775–811 (WFLC…VVLP) and 812–846 (DEVC…GIVP). Disordered regions lie at residues 890–968 (PLKD…ARGT), 988–1115 (PRGS…SLGS), and 1204–1226 (RPSA…APAP). Positions 897–915 (QQQQQQQQQQQKQQVAEQQ) are enriched in low complexity. Residues 933 to 942 (RPLQRQTTWA) are compositionally biased toward polar residues. A Phosphoserine modification is found at Ser-951. A compositionally biased stretch (pro residues) spans 1074-1083 (IPPPELPSDL). At Ser-1090 the chain carries Phosphoserine. Residues 1103–1115 (GSTASESSASLGS) are compositionally biased toward low complexity.

It localises to the golgi apparatus. Functionally, guanine nucleotide exchange factor (GEF) which may activate RAB10. Promotes the exchange of GDP to GTP, converting inactive GDP-bound Rab proteins into their active GTP-bound form. This is DENN domain-containing protein 4B (Dennd4b) from Mus musculus (Mouse).